Consider the following 354-residue polypeptide: Protein RecA (354 aa).

67-74 (GPESSGKT) serves as a coordination point for ATP.

The protein belongs to the RecA family.

The protein localises to the cytoplasm. Its function is as follows. Can catalyze the hydrolysis of ATP in the presence of single-stranded DNA, the ATP-dependent uptake of single-stranded DNA by duplex DNA, and the ATP-dependent hybridization of homologous single-stranded DNAs. It interacts with LexA causing its activation and leading to its autocatalytic cleavage. This Yersinia enterocolitica serotype O:8 / biotype 1B (strain NCTC 13174 / 8081) protein is Protein RecA.